Reading from the N-terminus, the 215-residue chain is Lysozyme-like protein 5 (215 aa).

An N-terminal signal peptide occupies residues 1-17 (MKHFFITILLFCSVVSA). The 198-residue stretch at 18–215 (ARNGIDINSP…GVSVDMNYIP (198 aa)) folds into the Ch-type lysozyme domain. Catalysis depends on residues aspartate 23, aspartate 113, and glutamate 115.

It belongs to the glycosyl hydrolase 25 family.

Its function is as follows. Plays a role in resistance to Gram-positive bacteria S.aureus or B.thuringiensis infection. This is Lysozyme-like protein 5 from Caenorhabditis elegans.